We begin with the raw amino-acid sequence, 219 residues long: Mediator of RNA polymerase II transcription subunit 20b (219 aa).

It belongs to the Mediator complex subunit 20 family. Component of the Mediator complex.

The protein resides in the nucleus. Functionally, component of the Mediator complex, a coactivator involved in the regulated transcription of nearly all RNA polymerase II-dependent genes. Mediator functions as a bridge to convey information from gene-specific regulatory proteins to the basal RNA polymerase II transcription machinery. The Mediator complex, having a compact conformation in its free form, is recruited to promoters by direct interactions with regulatory proteins and serves for the assembly of a functional preinitiation complex with RNA polymerase II and the general transcription factors. The chain is Mediator of RNA polymerase II transcription subunit 20b (MED20B) from Arabidopsis thaliana (Mouse-ear cress).